Consider the following 399-residue polypeptide: Elongation factor Tu (399 aa).

The 195-residue stretch at 10-204 folds into the tr-type G domain; the sequence is KPHVNIGTIG…AVDASIPEPE (195 aa). The G1 stretch occupies residues 19–26; sequence GHVDHGKT. GTP is bound at residue 19–26; that stretch reads GHVDHGKT. T26 provides a ligand contact to Mg(2+). A G2 region spans residues 60-64; it reads GITIN. Positions 81–84 are G3; it reads DCPG. GTP contacts are provided by residues 81-85 and 136-139; these read DCPGH and NKCD. The segment at 136–139 is G4; the sequence is NKCD. The segment at 174–176 is G5; the sequence is SGL.

Belongs to the TRAFAC class translation factor GTPase superfamily. Classic translation factor GTPase family. EF-Tu/EF-1A subfamily. As to quaternary structure, monomer.

The protein localises to the cytoplasm. It carries out the reaction GTP + H2O = GDP + phosphate + H(+). GTP hydrolase that promotes the GTP-dependent binding of aminoacyl-tRNA to the A-site of ribosomes during protein biosynthesis. This Prochlorococcus marinus (strain MIT 9515) protein is Elongation factor Tu.